Here is a 137-residue protein sequence, read N- to C-terminus: Fluoride-specific ion channel FluC 1 (137 aa).

4 helical membrane-spanning segments follow: residues 4–24, 37–57, 62–82, and 100–120; these read LIYI…YYLG, LATL…TTYI, ILPA…FTTF, and IAFL…GLGY. The Na(+) site is built by G77 and T80.

Belongs to the fluoride channel Fluc/FEX (TC 1.A.43) family.

It localises to the cell membrane. It catalyses the reaction fluoride(in) = fluoride(out). Na(+) is not transported, but it plays an essential structural role and its presence is essential for fluoride channel function. In terms of biological role, fluoride-specific ion channel. Important for reducing fluoride concentration in the cell, thus reducing its toxicity. The chain is Fluoride-specific ion channel FluC 1 from Bacillus cereus (strain ATCC 10987 / NRS 248).